We begin with the raw amino-acid sequence, 256 residues long: Small ribosomal subunit protein eS1 (256 aa).

Residues 1–18 (MAVGKNKRLSKGKKGIKK) show a composition bias toward basic residues. The disordered stretch occupies residues 1-20 (MAVGKNKRLSKGKKGIKKRT). Ala-2 carries the N-acetylalanine; partial modification.

The protein belongs to the eukaryotic ribosomal protein eS1 family. Component of the small ribosomal subunit. Mature ribosomes consist of a small (40S) and a large (60S) subunit. The 40S subunit contains about 33 different proteins and 1 molecule of RNA (18S). The 60S subunit contains about 49 different proteins and 3 molecules of RNA (25S, 5.8S and 5S).

It localises to the cytoplasm. The protein is Small ribosomal subunit protein eS1 (rps1) of Aspergillus terreus (strain NIH 2624 / FGSC A1156).